Here is a 46-residue protein sequence, read N- to C-terminus: Pape peptide (46 aa).

A compositionally biased stretch (low complexity) spans 1–10 (KQLLKEALAP). The interval 1-46 (KQLLKEALAPEPAPKPAPEPAPEPAPEPAPEAAPEPAAAAPEAAPE) is disordered. Residues 11–33 (EPAPKPAPEPAPEPAPEPAPEAA) are compositionally biased toward pro residues. 4 PAPE repeats span residues 16 to 19 (PAPE), 20 to 23 (PAPE), 24 to 27 (PAPE), and 28 to 31 (PAPE). Residues 34 to 46 (PEPAAAAPEAAPE) are compositionally biased toward low complexity.

As to expression, expressed by the venom gland.

Its subcellular location is the secreted. This chain is Pape peptide, found in Tityus stigmurus (Brazilian scorpion).